The following is a 400-amino-acid chain: Protein phosphatase methylesterase 1 (400 aa).

The interval Asp32–Glu70 is disordered. Residues Pro114–Ser365 enclose the AB hydrolase-1 domain. Residues Ser205, Asp233, and His359 contribute to the active site.

Belongs to the AB hydrolase superfamily. Interacts with and inactivates the phosphatase PP2A-like catalytic subunits PPG1, PPH21, PPH22, PPH3 and SIT4.

The enzyme catalyses [phosphatase 2A protein]-C-terminal L-leucine methyl ester + H2O = [phosphatase 2A protein]-C-terminal L-leucine + methanol + H(+). Functionally, demethylates proteins that have been reversibly carboxymethylated. Demethylates the phosphatase PP2A catalytic subunits PPH21 and PPH22. Forms inactive complexes (PP2Ai) with phosphatase PP2A-like catalytic subunits. Involved in the regulation of cell cycle progression at START. The protein is Protein phosphatase methylesterase 1 (PPE1) of Saccharomyces cerevisiae (strain ATCC 204508 / S288c) (Baker's yeast).